Here is a 421-residue protein sequence, read N- to C-terminus: Histidine--tRNA ligase (421 aa).

Belongs to the class-II aminoacyl-tRNA synthetase family. In terms of assembly, homodimer.

The protein resides in the cytoplasm. It carries out the reaction tRNA(His) + L-histidine + ATP = L-histidyl-tRNA(His) + AMP + diphosphate + H(+). The sequence is that of Histidine--tRNA ligase from Francisella tularensis subsp. tularensis (strain SCHU S4 / Schu 4).